The sequence spans 160 residues: Sulfur-rich protein (160 aa).

The next 2 membrane-spanning stretches (helical) occupy residues 63–83 and 92–112; these read ITMIVLGIILLIAGLALTFVL and FLFLIPAVIGLVKLLATSVFM.

The protein localises to the membrane. This chain is Sulfur-rich protein (srp), found in Chlamydia abortus (strain DSM 27085 / S26/3) (Chlamydophila abortus).